We begin with the raw amino-acid sequence, 134 residues long: ATP synthase epsilon chain (134 aa).

This sequence belongs to the ATPase epsilon chain family. In terms of assembly, F-type ATPases have 2 components, CF(1) - the catalytic core - and CF(0) - the membrane proton channel. CF(1) has five subunits: alpha(3), beta(3), gamma(1), delta(1), epsilon(1). CF(0) has three main subunits: a, b and c.

The protein localises to the cell membrane. Functionally, produces ATP from ADP in the presence of a proton gradient across the membrane. This Pelotomaculum thermopropionicum (strain DSM 13744 / JCM 10971 / SI) protein is ATP synthase epsilon chain.